A 72-amino-acid chain; its full sequence is Bowman-Birk type proteinase inhibitor 2a (72 aa).

7 cysteine pairs are disulfide-bonded: Cys8–Cys61, Cys9–Cys24, Cys12–Cys57, Cys14–Cys22, Cys31–Cys38, Cys35–Cys50, and Cys40–Cys48.

In terms of assembly, dimer.

Inhibits trypsin (IC(50)=0.9 nM) and alpha-chymotrypsin (IC(50)=1.1 nM). This chain is Bowman-Birk type proteinase inhibitor 2a, found in Lathyrus sativus (White vetchling).